A 175-amino-acid polypeptide reads, in one-letter code: ATP-dependent protease subunit HslV (175 aa).

The active site involves Thr2. Gly158, Cys161, and Thr164 together coordinate Na(+).

Belongs to the peptidase T1B family. HslV subfamily. A double ring-shaped homohexamer of HslV is capped on each side by a ring-shaped HslU homohexamer. The assembly of the HslU/HslV complex is dependent on binding of ATP.

It localises to the cytoplasm. The catalysed reaction is ATP-dependent cleavage of peptide bonds with broad specificity.. With respect to regulation, allosterically activated by HslU binding. Its function is as follows. Protease subunit of a proteasome-like degradation complex believed to be a general protein degrading machinery. The protein is ATP-dependent protease subunit HslV of Haemophilus influenzae (strain PittGG).